We begin with the raw amino-acid sequence, 139 residues long: Iron-sulfur cluster assembly 1 homolog, mitochondrial (139 aa).

Residues Cys52, Cys117, and Cys119 each contribute to the Fe cation site.

Belongs to the HesB/IscA family.

It localises to the mitochondrion. Its function is as follows. Involved in the assembly of mitochondrial iron-sulfur proteins. Probably involved in the binding of an intermediate of Fe/S cluster assembly. This chain is Iron-sulfur cluster assembly 1 homolog, mitochondrial (isca1), found in Dictyostelium discoideum (Social amoeba).